Reading from the N-terminus, the 131-residue chain is UPF0102 protein YraN (131 aa).

Positions 1 to 19 are enriched in polar residues; that stretch reads MATVPTRSGSPRQLTTKQT. A disordered region spans residues 1–20; the sequence is MATVPTRSGSPRQLTTKQTG.

It belongs to the UPF0102 family.

In Escherichia fergusonii (strain ATCC 35469 / DSM 13698 / CCUG 18766 / IAM 14443 / JCM 21226 / LMG 7866 / NBRC 102419 / NCTC 12128 / CDC 0568-73), this protein is UPF0102 protein YraN.